Reading from the N-terminus, the 82-residue chain is MSHLPLHHPAAVVTLRPLRPRAAVATRLRRHRLAGGPTRRLRRRPAVTRRRRPDRRFVRCRPSPTRRGLPGCWRHSSTGPHT.

Residues 35 to 54 (GGPTRRLRRRPAVTRRRRPD) show a composition bias toward basic residues. The segment at 35 to 82 (GGPTRRLRRRPAVTRRRRPDRRFVRCRPSPTRRGLPGCWRHSSTGPHT) is disordered.

Its subcellular location is the cytoplasm. In Mycobacterium tuberculosis (strain ATCC 25618 / H37Rv), this protein is Protein Rv1078A.